An 85-amino-acid chain; its full sequence is Small ribosomal subunit protein bS16 (85 aa).

It belongs to the bacterial ribosomal protein bS16 family.

This Rubrobacter xylanophilus (strain DSM 9941 / JCM 11954 / NBRC 16129 / PRD-1) protein is Small ribosomal subunit protein bS16.